A 98-amino-acid chain; its full sequence is DNA-binding protein Fis (98 aa).

The H-T-H motif DNA-binding region spans 74–93 (QTRAATMMGINRGTLRKKLK).

Belongs to the transcriptional regulatory Fis family. Homodimer.

Its function is as follows. Activates ribosomal RNA transcription. Plays a direct role in upstream activation of rRNA promoters. The polypeptide is DNA-binding protein Fis (Photobacterium profundum (strain SS9)).